The following is a 373-amino-acid chain: 3 beta-hydroxysteroid dehydrogenase/Delta 5--&gt;4-isomerase type 3 (373 aa).

Y155 acts as the Proton acceptor in catalysis. K159 serves as a coordination point for NAD(+). Residues V288–I308 form a helical membrane-spanning segment.

It belongs to the 3-beta-HSD family. Liver and kidney. Greater expression in liver.

The protein localises to the endoplasmic reticulum membrane. The protein resides in the mitochondrion membrane. It carries out the reaction a 3beta-hydroxy-Delta(5)-steroid + NAD(+) = a 3-oxo-Delta(5)-steroid + NADH + H(+). It catalyses the reaction a 3-oxo-Delta(5)-steroid = a 3-oxo-Delta(4)-steroid. It participates in lipid metabolism; steroid biosynthesis. Functionally, 3-beta-HSD is a bifunctional enzyme, that catalyzes the oxidative conversion of Delta(5)-ene-3-beta-hydroxy steroid, and the oxidative conversion of ketosteroids. The 3-beta-HSD enzymatic system plays a crucial role in the biosynthesis of all classes of hormonal steroids. The chain is 3 beta-hydroxysteroid dehydrogenase/Delta 5--&gt;4-isomerase type 3 (Hsd3b3) from Mus musculus (Mouse).